The sequence spans 86 residues: Exodeoxyribonuclease 7 small subunit (86 aa).

Residues 1-27 form a disordered region; that stretch reads MQDELFETEKIPPKNTKNAKNAPKKSF.

The protein belongs to the XseB family. Heterooligomer composed of large and small subunits.

The protein resides in the cytoplasm. It catalyses the reaction Exonucleolytic cleavage in either 5'- to 3'- or 3'- to 5'-direction to yield nucleoside 5'-phosphates.. In terms of biological role, bidirectionally degrades single-stranded DNA into large acid-insoluble oligonucleotides, which are then degraded further into small acid-soluble oligonucleotides. The polypeptide is Exodeoxyribonuclease 7 small subunit (Helicobacter pylori (strain G27)).